Consider the following 194-residue polypeptide: Molybdenum cofactor guanylyltransferase (194 aa).

GTP is bound by residues Leu12 to Gly14, Lys25, Asn53, Asp70, and Asp100. Residue Asp100 participates in Mg(2+) binding.

It belongs to the MobA family. Monomer. Mg(2+) is required as a cofactor.

Its subcellular location is the cytoplasm. The enzyme catalyses Mo-molybdopterin + GTP + H(+) = Mo-molybdopterin guanine dinucleotide + diphosphate. Its function is as follows. Transfers a GMP moiety from GTP to Mo-molybdopterin (Mo-MPT) cofactor (Moco or molybdenum cofactor) to form Mo-molybdopterin guanine dinucleotide (Mo-MGD) cofactor. The polypeptide is Molybdenum cofactor guanylyltransferase (Vibrio atlanticus (strain LGP32) (Vibrio splendidus (strain Mel32))).